The primary structure comprises 860 residues: Protein translocase subunit SecA (860 aa).

ATP is bound by residues Q87, 105-109 (GEGKT), and D514. Zn(2+)-binding residues include C846, C848, C857, and C858.

The protein belongs to the SecA family. In terms of assembly, monomer and homodimer. Part of the essential Sec protein translocation apparatus which comprises SecA, SecYEG and auxiliary proteins SecDF. Other proteins may also be involved. Zn(2+) serves as cofactor.

Its subcellular location is the cell membrane. The protein resides in the cytoplasm. It catalyses the reaction ATP + H2O + cellular proteinSide 1 = ADP + phosphate + cellular proteinSide 2.. Its function is as follows. Part of the Sec protein translocase complex. Interacts with the SecYEG preprotein conducting channel. Has a central role in coupling the hydrolysis of ATP to the transfer of proteins into and across the cell membrane, serving as an ATP-driven molecular motor driving the stepwise translocation of polypeptide chains across the membrane. The polypeptide is Protein translocase subunit SecA (Endomicrobium trichonymphae).